A 427-amino-acid chain; its full sequence is MGIPTSSVSEEQESSEGQDSGDICSEENQIVSSYASKVCFEIEQDYKNRQFLGPEGNVDVELIDKSTNTYSVRFPTAGWYLWPATGLGFLVRDVVTLTIGFGSWNQHLALDLQHHEQWLVGGPLFDITAEPEEAVAEIHLPHFISLQAGEVDVSWFLIAHFKNEGMVLEHPARVEPFYAVLEKPSFSLMGILLRIASGTRLSIPITSNTLIYYHPHPEDIKFHLYLVPSDALLTKMIDDEEDRFCGVRLQTSPPVEPLNFGARYIVSNSAHLEIIPTELKLSYRSPGEIQHFSKFYAGQMKEPIQLEITEKRHETLVWKTVVKPVDIQLGAASAPPAFSGAAFVKENHRQLQARMGDLKGVLDDLQDNEVLTENEKELVEQAKTRQSKNDTLLTMVEKKGDRALELLFRSISERDPYLVSYLRQQSL.

The segment at 1-23 (MGIPTSSVSEEQESSEGQDSGDI) is disordered. The tract at residues 51-186 (FLGPEGNVDV…FYAVLEKPSF (136 aa)) is ZU5. The FIIND domain occupies 51 to 336 (FLGPEGNVDV…IQLGAASAPP (286 aa)). The tract at residues 187–336 (SLMGILLRIA…IQLGAASAPP (150 aa)) is UPA. The 91-residue stretch at 336-426 (PAFSGAAFVK…YLVSYLRQQS (91 aa)) folds into the CARD domain.

Interacts with DPP9; leading to inhibit activation of the inflammasome. DPP9 acts via formation of a ternary complex, composed of a DPP9 homodimer, one full-length CARD8 protein, and one cleaved C-terminus of CARD8 (Caspase recruitment domain-containing protein 8, C-terminus). Interacts with DPP8; leading to inhibit activation of the inflammasome, probably via formation of a ternary complex with DPP8. Interacts with NLRP3. Interacts with IKBKG/NEMO. Interacts with DRAL. Binds to caspase-1 (CASP1), CARD16/pseudo-ICE and CARD18/ICEBERG. Interacts with NLRP2 (via NACHT domain). In terms of assembly, interacts with the C-terminal part of CARD8 (Caspase recruitment domain-containing protein 8, C-terminus) in absence of pathogens and other damage-associated signals. As to quaternary structure, interacts with the N-terminal part of CARD8 (Caspase recruitment domain-containing protein 8, N-terminus) in absence of pathogens and other damage-associated signals. Homomultimer; forms the CARD8 inflammasome polymeric complex, a filament composed of homopolymers of this form in response to pathogens and other damage-associated signals. The CARD8 inflammasome polymeric complex directly recruits pro-caspase-1 (proCASP1) independently of PYCARD/ASC. Interacts (via CARD domain) with CASP1 (via CARD domain); leading to CASP1 activation. Undergoes autocatalytic processing within the FIIND domain to generate the N-terminal and C-terminal parts, which are associated non-covalently in absence of pathogens and other damage-associated signals. Post-translationally, ubiquitinated by the N-end rule pathway in response to pathogens and other damage-associated signals, leading to its degradation by the proteasome and subsequent release of the cleaved C-terminal part of the protein (Caspase recruitment domain-containing protein 8, C-terminus), which polymerizes and forms the CARD8 inflammasome.

Its subcellular location is the cytoplasm. It localises to the nucleus. It is found in the inflammasome. With respect to regulation, CARD8 inflammasome is inhibited by DPP8 and DPP9, which sequester the C-terminal fragment of CARD8 (Caspase recruitment domain-containing protein 8, C-terminus) in a ternary complex, thereby preventing CARD8 oligomerization and activation. CARD8 inflammasome is activated by Val-boroPro (Talabostat, PT-100), an inhibitor of dipeptidyl peptidases DPP8 and DPP9. Val-boroPro relieves inhibition of DPP8 and/or DPP9 by inducing the proteasome-mediated destruction of the N-terminal part of CARD8, releasing its C-terminal part from autoinhibition. Inflammasome sensor, which mediates inflammasome activation in response to various pathogen-associated signals, leading to subsequent pyroptosis of CD4(+) T-cells and macrophages. Inflammasomes are supramolecular complexes that assemble in the cytosol in response to pathogens and other damage-associated signals and play critical roles in innate immunity and inflammation. Acts as a recognition receptor (PRR): recognizes specific pathogens and other damage-associated signals, such as Val-boroPro inhibitor, and mediates CARD8 inflammasome activation. In response to pathogen-associated signals, the N-terminal part of CARD8 is degraded by the proteasome, releasing the cleaved C-terminal part of the protein (Caspase recruitment domain-containing protein 8, C-terminus), which polymerizes to initiate the formation of the inflammasome complex: the CARD8 inflammasome directly recruits pro-caspase-1 (proCASP1) independently of PYCARD/ASC and promotes caspase-1 (CASP1) activation, which subsequently cleaves and activates inflammatory cytokines IL1B and IL18 and gasdermin-D (GSDMD), leading to pyroptosis. Also acts as a negative regulator of the NLRP3 inflammasome. May also act as an inhibitor of NF-kappa-B activation. Functionally, constitutes the precursor of the CARD8 inflammasome, which mediates autoproteolytic processing within the FIIND domain to generate the N-terminal and C-terminal parts, which are associated non-covalently in absence of pathogens and other damage-associated signals. Its function is as follows. Regulatory part that prevents formation of the CARD8 inflammasome: in absence of pathogens and other damage-associated signals, interacts with the C-terminal part of CARD8 (Caspase recruitment domain-containing protein 8, C-terminus), preventing activation of the CARD8 inflammasome. In response to pathogen-associated signals, this part is ubiquitinated by the N-end rule pathway and degraded by the proteasome, releasing the cleaved C-terminal part of the protein, which polymerizes and forms the CARD8 inflammasome. In terms of biological role, constitutes the active part of the CARD8 inflammasome. In absence of pathogens and other damage-associated signals, interacts with the N-terminal part of CARD8 (Caspase recruitment domain-containing protein 8, N-terminus), preventing activation of the CARD8 inflammasome. In response to pathogen-associated signals, the N-terminal part of CARD8 is degraded by the proteasome, releasing this form, which polymerizes to form the CARD8 inflammasome complex: the CARD8 inflammasome complex then directly recruits pro-caspase-1 (proCASP1) and promotes caspase-1 (CASP1) activation, leading to gasdermin-D (GSDMD) cleavage and subsequent pyroptosis. In Pongo abelii (Sumatran orangutan), this protein is Caspase recruitment domain-containing protein 8.